Consider the following 765-residue polypeptide: Putative chloride channel-like protein CLC-g (765 aa).

Helical transmembrane passes span V67–A87, F116–F136, L167–A187, M190–R210, G232–L252, A262–I282, V315–L335, I355–L375, F438–V458, G462–L482, A494–V514, and I515–I535. The 73-residue stretch at M568–S640 folds into the CBS 1 domain. S646 is subject to Phosphoserine. The CBS 2 domain occupies F687 to S748. Residues H715–H735 form a helical membrane-spanning segment.

It belongs to the chloride channel (TC 2.A.49) family. As to quaternary structure, homodimer. Interacts with PP2A5.

It is found in the membrane. In terms of biological role, putative voltage-gated chloride channel. The polypeptide is Putative chloride channel-like protein CLC-g (CLC-G) (Arabidopsis thaliana (Mouse-ear cress)).